Reading from the N-terminus, the 91-residue chain is MIPRVLILLTLVALFCACSTLAAVAHIEVDCIPPFTVYLLYGFVTLILICSLVTVVIAFIQFIDWVCVRIAYLRHHPQYRDRTIADLLRIL.

The Cytoplasmic portion of the chain corresponds to 1-4; the sequence is MIPR. The propeptide at 1 to 22 is signal peptide; that stretch reads MIPRVLILLTLVALFCACSTLA. A helical membrane pass occupies residues 5-25; it reads VLILLTLVALFCACSTLAAVA. The Lumenal segment spans residues 26–34; it reads HIEVDCIPP. A helical transmembrane segment spans residues 35 to 60; it reads FTVYLLYGFVTLILICSLVTVVIAFI. The Cytoplasmic segment spans residues 61-91; sequence QFIDWVCVRIAYLRHHPQYRDRTIADLLRIL.

It belongs to the adenoviridae E3-RID-alpha family. As to quaternary structure, homodimer with only one chain cleaved by signal peptidase. Interacts with E3 RID-beta and E3 CR1-alpha. The signal peptide is only cleaved partially by host signal peptidase. This results in two forms of the protein, one uncleaved with two transmembrane regions, and one cleaved with one transmembrane region.

The protein resides in the host membrane. The protein localises to the host endoplasmic reticulum. Prevents infected cell apoptosis induced by the host immune system. Acts by down-regulating a number of cell surface receptors in the tumor necrosis factor (TNF) receptor superfamily, namely FAS, TNFRSF10A/TRAIL receptor 1, and TNFRSF10B/TRAIL receptor 2. Down-regulation of these death receptors protects adenovirus-infected cells from apoptosis induced by the death receptor ligands Fas ligand and TRAIL. RID complex also down-regulates certain tyrosine kinase cell surface receptors, especially the epidermal growth factor receptor (EGFR). RID-mediated Fas and EGFR down-regulation occurs via endocytosis of the receptors into endosomes followed by transport to and degradation within lysosomes. This Homo sapiens (Human) protein is Pre-early 3 receptor internalization and degradation alpha protein.